Here is a 565-residue protein sequence, read N- to C-terminus: MRQSKFFMPTLKEAPSDAVAKSHQLMLRGGYIRQVTAGVYAYLPLGYRVLRKAENIIEEEMNNINVPEMIMPHLLPATLWQESGRYKKYGAEMFKLQDRHGRESLLGPTHEETFTEIVAKNLKSYKQMPLALYQIQTKFRDENRPRFGLLRGREFVMLDGYSFAATREQLDEQFDDQKSAYLKIFNRAGVTVHPVIADSGTMGGKNSTEFQAPAAIGEDTIATNEKGTYAANLEMAKSIDTFKQDPEDAKELTKVATPGMDTIDKLAEFLKVPATRIVKSILYIADDQKVLVLIRGDKEINEVKLGHVLDADEVRTANADELVEITGSEKGGVGPIGADWADKIVADETVKGLYNVVVGANETDYQYQNANLDRDFKVDEFADIRTANEGELDPVDHLPLKFTTSIEVGHIFKLGTYYTKTMGADFLDNNGKAKPVIMGSYGIGVTRMLSAAVEQHLTENGIAWPKEIAPFDVHLIQMKMKDEAQTELAEKLEKELSTKYDVLYDDRNERPGVKFNDADLVGAPLRITIGRKAKDGIVEVKRPTDEKAMEVNISDLDAMITKELG.

It belongs to the class-II aminoacyl-tRNA synthetase family. ProS type 1 subfamily. In terms of assembly, homodimer.

Its subcellular location is the cytoplasm. The catalysed reaction is tRNA(Pro) + L-proline + ATP = L-prolyl-tRNA(Pro) + AMP + diphosphate. In terms of biological role, catalyzes the attachment of proline to tRNA(Pro) in a two-step reaction: proline is first activated by ATP to form Pro-AMP and then transferred to the acceptor end of tRNA(Pro). As ProRS can inadvertently accommodate and process non-cognate amino acids such as alanine and cysteine, to avoid such errors it has two additional distinct editing activities against alanine. One activity is designated as 'pretransfer' editing and involves the tRNA(Pro)-independent hydrolysis of activated Ala-AMP. The other activity is designated 'posttransfer' editing and involves deacylation of mischarged Ala-tRNA(Pro). The misacylated Cys-tRNA(Pro) is not edited by ProRS. This Lactobacillus gasseri (strain ATCC 33323 / DSM 20243 / BCRC 14619 / CIP 102991 / JCM 1131 / KCTC 3163 / NCIMB 11718 / NCTC 13722 / AM63) protein is Proline--tRNA ligase.